The sequence spans 254 residues: Alcohol dehydrogenase (254 aa).

NAD(+) is bound at residue 10 to 33; it reads FVAGLGGIGLDTNREIVKSGPKNL. Ser-138 contributes to the substrate binding site. The active-site Proton acceptor is the Tyr-151.

The protein belongs to the short-chain dehydrogenases/reductases (SDR) family. As to quaternary structure, homodimer.

The catalysed reaction is a primary alcohol + NAD(+) = an aldehyde + NADH + H(+). It carries out the reaction a secondary alcohol + NAD(+) = a ketone + NADH + H(+). In Scaptomyza albovittata (Fruit fly), this protein is Alcohol dehydrogenase (Adh).